Consider the following 235-residue polypeptide: Uridylate kinase (235 aa).

9 to 12 (KLSG) contributes to the ATP binding site. The segment at 17–22 (GKDGYG) is involved in allosteric activation by GTP. Glycine 51 serves as a coordination point for UMP. ATP is bound by residues glycine 52 and arginine 56. Residues aspartate 71 and 132-139 (TGNPYFTT) each bind UMP. Residues threonine 159, tyrosine 165, and aspartate 168 each contribute to the ATP site.

Belongs to the UMP kinase family. Homohexamer.

Its subcellular location is the cytoplasm. It carries out the reaction UMP + ATP = UDP + ADP. It participates in pyrimidine metabolism; CTP biosynthesis via de novo pathway; UDP from UMP (UMPK route): step 1/1. Allosterically activated by GTP. Inhibited by UTP. Its function is as follows. Catalyzes the reversible phosphorylation of UMP to UDP. In Chlorobium luteolum (strain DSM 273 / BCRC 81028 / 2530) (Pelodictyon luteolum), this protein is Uridylate kinase.